The following is a 689-amino-acid chain: Protein asunder (689 aa).

Residues 521–550 are a coiled coil; the sequence is NGARLKLSKAKDQYRLLYRELEQLIQLNAT. Disordered stretches follow at residues 578 to 619 and 662 to 689; these read GASL…SKRR and PDFGNKDKDTVASGASITPNVKEESVRS. Low complexity predominate over residues 599 to 614; sequence SSGSASGSSNSNSLLK. Positions 613–619 match the Nuclear localization signal (NLS) motif; that stretch reads LKASKRR.

The protein belongs to the Integrator subunit 13 family. As to quaternary structure, belongs to the multiprotein complex Integrator, at least composed of IntS1, IntS2, IntS3, IntS4, omd/IntS5, IntS6, defl/IntS7, IntS8, IntS9, IntS10, IntS11, IntS12, asun/IntS13, IntS14 and IntS15. The core complex associates with protein phosphatase 2A subunits mts/PP2A and Pp2A-29B, to form the Integrator-PP2A (INTAC) complex. In terms of processing, phosphorylated.

It is found in the nucleus. It localises to the cytoplasm. The protein resides in the perinuclear region. Its function is as follows. Component of the integrator complex, a multiprotein complex that terminates RNA polymerase II (Pol II) transcription in the promoter-proximal region of genes. The integrator complex provides a quality checkpoint during transcription elongation by driving premature transcription termination of transcripts that are unfavorably configured for transcriptional elongation: the complex terminates transcription by (1) catalyzing dephosphorylation of the C-terminal domain (CTD) of Pol II subunit Polr2A/Rbp1 and Spt5, and (2) degrading the exiting nascent RNA transcript via endonuclease activity. The integrator complex is also involved in the 3'-end processing of the U7 snRNA, and also the spliceosomal snRNAs U1, U2, U4 and U5. This Drosophila yakuba (Fruit fly) protein is Protein asunder (asun).